The primary structure comprises 405 residues: Accessory Sec system protein translocase subunit SecY2 (405 aa).

Transmembrane regions (helical) follow at residues 14–34 (MCTL…LPFV), 65–85 (LFSI…MFSF), 104–124 (MYLT…NLPV), 131–151 (FLVF…LVWL), 156–176 (ATIG…ASLP), 190–210 (LGLL…VVLF), 243–263 (GMPY…LLLL), 285–305 (PLWI…FAFV), 343–363 (FALI…LFVL), and 368–388 (LLKV…LFTI).

Belongs to the SecY/SEC61-alpha family. SecY2 subfamily. Component of the accessory SecA2/SecY2 protein translocase complex required to export cell wall proteins. May form heterotrimers with SecE and SecG subunits.

It localises to the cell membrane. In terms of biological role, part of the accessory SecA2/SecY2 system specifically required for export of possible cell wall proteins. The central subunit of a protein translocation channel. In Streptococcus oralis (strain Uo5), this protein is Accessory Sec system protein translocase subunit SecY2.